A 342-amino-acid chain; its full sequence is NADPH-dependent methylglyoxal reductase GRE2 (342 aa).

NADP(+)-binding positions include 7–12 (GANGFI), Arg-32, Lys-36, 57–58 (DI), Tyr-165, Lys-169, Val-199, and Ser-216. Lys-169 serves as the catalytic Proton donor. Ser-333 is subject to Phosphoserine.

This sequence belongs to the NAD(P)-dependent epimerase/dehydratase family. Dihydroflavonol-4-reductase subfamily. As to quaternary structure, monomer. Post-translationally, the N-terminus is blocked.

The protein localises to the cytoplasm. Its subcellular location is the nucleus. The enzyme catalyses (S)-lactaldehyde + NADP(+) = methylglyoxal + NADPH + H(+). The catalysed reaction is 3-methylbutanol + NADP(+) = 3-methylbutanal + NADPH + H(+). It carries out the reaction 2,5-hexanedione + 2 NADPH + 2 H(+) = (2S,5S)-hexanediol + 2 NADP(+). It catalyses the reaction (S)-3-chloro-1-phenyl-1-propanol + NADP(+) = 3-chloro-1-phenyl-1-propanone + NADPH + H(+). Activated by glutathione. Catalyzes the irreversible reduction of the cytotoxic compound methylglyoxal (MG, 2-oxopropanal) to (S)-lactaldehyde as an alternative to detoxification of MG by glyoxalase I GLO1. MG is synthesized via a bypath of glycolysis from dihydroxyacetone phosphate and is believed to play a role in cell cycle regulation and stress adaptation. Also catalyzes the reduction of 3-methylbutanal to 3-methylbutanol. Acts as a suppressor of 3-methylbutanol-induced filamentation by modulating the levels of 3-methylbutanal, the signal to which cells respond by filamentation. Also involved in ergosterol metabolism. This Saccharomyces cerevisiae (strain ATCC 204508 / S288c) (Baker's yeast) protein is NADPH-dependent methylglyoxal reductase GRE2 (GRE2).